Consider the following 628-residue polypeptide: Chaperone protein HtpG (628 aa).

Positions methionine 1–arginine 340 are a; substrate-binding. The segment at glutamate 341–lysine 556 is b. The c stretch occupies residues leucine 557–alanine 628.

Belongs to the heat shock protein 90 family. As to quaternary structure, homodimer.

It localises to the cytoplasm. In terms of biological role, molecular chaperone. Has ATPase activity. The polypeptide is Chaperone protein HtpG (Sodalis glossinidius (strain morsitans)).